We begin with the raw amino-acid sequence, 578 residues long: Protein SIA1 (578 aa).

The signal sequence occupies residues 1-28 (MFRNRRILLYARRFFLVWICFLFITSWS).

Its function is as follows. May be involved in the activation of the plasma membrane proton-ATPase by glucose. The protein is Protein SIA1 (SIA1) of Kluyveromyces lactis (strain ATCC 8585 / CBS 2359 / DSM 70799 / NBRC 1267 / NRRL Y-1140 / WM37) (Yeast).